The chain runs to 138 residues: Membrane protein P8A7 (138 aa).

4 consecutive transmembrane segments (helical) span residues 12 to 30 (ILVI…YLFV), 32 to 56 (GLFH…IVLL), 71 to 90 (YTYW…LILG), and 93 to 118 (GFFL…LLGC).

Its subcellular location is the membrane. This Dictyostelium discoideum (Social amoeba) protein is Membrane protein P8A7 (pmpA).